The following is a 180-amino-acid chain: Flavin prenyltransferase UbiX (180 aa).

FMN-binding positions include Gly9–Ser11, Ser33, Ser84–Thr87, and Arg119. Residues Tyr149 and Arg165 each contribute to the dimethylallyl phosphate site.

The protein belongs to the UbiX/PAD1 family.

The enzyme catalyses dimethylallyl phosphate + FMNH2 = prenylated FMNH2 + phosphate. Flavin prenyltransferase that catalyzes the synthesis of the prenylated FMN cofactor (prenyl-FMN) for 4-hydroxy-3-polyprenylbenzoic acid decarboxylase UbiD. The prenyltransferase is metal-independent and links a dimethylallyl moiety from dimethylallyl monophosphate (DMAP) to the flavin N5 and C6 atoms of FMN. In Thermoplasma acidophilum (strain ATCC 25905 / DSM 1728 / JCM 9062 / NBRC 15155 / AMRC-C165), this protein is Flavin prenyltransferase UbiX.